Reading from the N-terminus, the 262-residue chain is MKDLDFSKKPLIGVVHLKPLPGSPRYGGDFEEVIEWAIRDAKTYEEAGFDGIIVENFGDSPFSKTLPREVIPAFTVVAKAVKKEVSLPLGINALRNDCIVAYSIAHAVGGSFIRVNVLTGVAFTDQGIIEGCARELWNVKRIIGGDILTLADVHVKHAVHFTNFEDAVKDTVERGLADGIIVTGRRTGESISLEDLILAKRVSSIPVLVGSGVNPRNFRTLFKYADGFIVGTWVKENGKINNPVSLERAKILVRMKNSLMGV.

The protein belongs to the BtpA family.

This is an uncharacterized protein from Pyrococcus furiosus (strain ATCC 43587 / DSM 3638 / JCM 8422 / Vc1).